A 719-amino-acid polypeptide reads, in one-letter code: Glycine--tRNA ligase beta subunit (719 aa).

Positions 65–84 (PDREEEIKGPPAKAAFKDGK) are disordered.

The protein belongs to the class-II aminoacyl-tRNA synthetase family. As to quaternary structure, tetramer of two alpha and two beta subunits.

Its subcellular location is the cytoplasm. It carries out the reaction tRNA(Gly) + glycine + ATP = glycyl-tRNA(Gly) + AMP + diphosphate. The chain is Glycine--tRNA ligase beta subunit from Trichodesmium erythraeum (strain IMS101).